The primary structure comprises 311 residues: Methionyl-tRNA formyltransferase (311 aa).

Serine 110 to proline 113 contributes to the (6S)-5,6,7,8-tetrahydrofolate binding site.

This sequence belongs to the Fmt family.

The enzyme catalyses L-methionyl-tRNA(fMet) + (6R)-10-formyltetrahydrofolate = N-formyl-L-methionyl-tRNA(fMet) + (6S)-5,6,7,8-tetrahydrofolate + H(+). Functionally, attaches a formyl group to the free amino group of methionyl-tRNA(fMet). The formyl group appears to play a dual role in the initiator identity of N-formylmethionyl-tRNA by promoting its recognition by IF2 and preventing the misappropriation of this tRNA by the elongation apparatus. The sequence is that of Methionyl-tRNA formyltransferase from Streptococcus uberis (strain ATCC BAA-854 / 0140J).